Here is a 352-residue protein sequence, read N- to C-terminus: Photosystem II D2 protein (352 aa).

The helical transmembrane segment at Thr40–Thr60 threads the bilayer. Residue His117 coordinates chlorophyll a. Residues Gly124–Pro140 traverse the membrane as a helical segment. Pheophytin a contacts are provided by Gln129 and Asn142. The helical transmembrane segment at Val152–Ser165 threads the bilayer. His197 contributes to the chlorophyll a binding site. A helical membrane pass occupies residues Gly207–Glu227. Residues His214 and Phe261 each coordinate a plastoquinone. His214 is a Fe cation binding site. His268 contacts Fe cation. The helical transmembrane segment at Gly278–Arg294 threads the bilayer.

Belongs to the reaction center PufL/M/PsbA/D family. As to quaternary structure, PSII is composed of 1 copy each of membrane proteins PsbA, PsbB, PsbC, PsbD, PsbE, PsbF, PsbH, PsbI, PsbJ, PsbK, PsbL, PsbM, PsbT, PsbX, PsbY, PsbZ, Psb30/Ycf12, at least 3 peripheral proteins of the oxygen-evolving complex and a large number of cofactors. It forms dimeric complexes. The D1/D2 heterodimer binds P680, chlorophylls that are the primary electron donor of PSII, and subsequent electron acceptors. It shares a non-heme iron and each subunit binds pheophytin, quinone, additional chlorophylls, carotenoids and lipids. There is also a Cl(-1) ion associated with D1 and D2, which is required for oxygen evolution. The PSII complex binds additional chlorophylls, carotenoids and specific lipids. serves as cofactor.

It localises to the plastid. The protein localises to the organellar chromatophore thylakoid membrane. It carries out the reaction 2 a plastoquinone + 4 hnu + 2 H2O = 2 a plastoquinol + O2. Photosystem II (PSII) is a light-driven water:plastoquinone oxidoreductase that uses light energy to abstract electrons from H(2)O, generating O(2) and a proton gradient subsequently used for ATP formation. It consists of a core antenna complex that captures photons, and an electron transfer chain that converts photonic excitation into a charge separation. The D1/D2 (PsbA/PsbD) reaction center heterodimer binds P680, the primary electron donor of PSII as well as several subsequent electron acceptors. D2 is needed for assembly of a stable PSII complex. The polypeptide is Photosystem II D2 protein (Paulinella chromatophora).